The primary structure comprises 608 residues: Putative multicopper oxidase GMC1 (608 aa).

Plastocyanin-like domains are found at residues 51 to 163 (INGY…LIVE), 243 to 374 (LING…ELYR), and 421 to 548 (ERTF…FEVP). Cu cation-binding residues include His-100, His-102, His-145, and His-147. His-452, His-455, His-457, His-530, Cys-531, His-532, and His-536 together coordinate Cu cation.

Belongs to the multicopper oxidase family. The cofactor is Cu cation.

Functionally, could be an iron transport multicopper oxidase, which is required for Fe(2+) high affinity uptake. May be required to oxidize Fe(2+) and release it from the transporter. Essential component of copper-dependent iron transport. Involved in meiotic prophase and synaptonemal complex (SC) assembly. The polypeptide is Putative multicopper oxidase GMC1 (GMC1) (Saccharomyces cerevisiae (strain ATCC 204508 / S288c) (Baker's yeast)).